The chain runs to 209 residues: Stringent starvation protein A homolog (209 aa).

In terms of domain architecture, GST N-terminal spans 5–83 (SIMTLYSGPL…YLDERFPHPP (79 aa)). The region spanning 88–203 (YPVARSRCRL…ASLSESESEL (116 aa)) is the GST C-terminal domain.

Belongs to the GST superfamily. HSP26 family.

Its function is as follows. Forms an equimolar complex with the RNA polymerase holoenzyme (RNAP) but not with the core enzyme. In Coxiella burnetii (strain RSA 493 / Nine Mile phase I), this protein is Stringent starvation protein A homolog (sspA).